A 262-amino-acid polypeptide reads, in one-letter code: Phosphatidylserine decarboxylase proenzyme (262 aa).

Residues D86, H142, and S226 each act as charge relay system; for autoendoproteolytic cleavage activity in the active site. The active-site Schiff-base intermediate with substrate; via pyruvic acid; for decarboxylase activity is S226. S226 carries the pyruvic acid (Ser); by autocatalysis modification.

It belongs to the phosphatidylserine decarboxylase family. PSD-B subfamily. Prokaryotic type I sub-subfamily. As to quaternary structure, heterodimer of a large membrane-associated beta subunit and a small pyruvoyl-containing alpha subunit. Requires pyruvate as cofactor. In terms of processing, is synthesized initially as an inactive proenzyme. Formation of the active enzyme involves a self-maturation process in which the active site pyruvoyl group is generated from an internal serine residue via an autocatalytic post-translational modification. Two non-identical subunits are generated from the proenzyme in this reaction, and the pyruvate is formed at the N-terminus of the alpha chain, which is derived from the carboxyl end of the proenzyme. The autoendoproteolytic cleavage occurs by a canonical serine protease mechanism, in which the side chain hydroxyl group of the serine supplies its oxygen atom to form the C-terminus of the beta chain, while the remainder of the serine residue undergoes an oxidative deamination to produce ammonia and the pyruvoyl prosthetic group on the alpha chain. During this reaction, the Ser that is part of the protease active site of the proenzyme becomes the pyruvoyl prosthetic group, which constitutes an essential element of the active site of the mature decarboxylase.

Its subcellular location is the cell membrane. It catalyses the reaction a 1,2-diacyl-sn-glycero-3-phospho-L-serine + H(+) = a 1,2-diacyl-sn-glycero-3-phosphoethanolamine + CO2. Its pathway is phospholipid metabolism; phosphatidylethanolamine biosynthesis; phosphatidylethanolamine from CDP-diacylglycerol: step 2/2. Catalyzes the formation of phosphatidylethanolamine (PtdEtn) from phosphatidylserine (PtdSer). This chain is Phosphatidylserine decarboxylase proenzyme, found in Bacillus cereus (strain ZK / E33L).